A 453-amino-acid polypeptide reads, in one-letter code: Ribulose bisphosphate carboxylase large chain (453 aa).

Residues 1 to 2 constitute a propeptide that is removed on maturation; sequence MS. An N-acetylproline modification is found at Pro-3. The residue at position 14 (Lys-14) is an N6,N6,N6-trimethyllysine. Residues Asn-123 and Thr-173 each coordinate substrate. Catalysis depends on Lys-175, which acts as the Proton acceptor. Residue Lys-177 participates in substrate binding. Mg(2+) is bound by residues Lys-201, Asp-203, and Glu-204. Lys-201 carries the post-translational modification N6-carboxylysine. The active-site Proton acceptor is the His-294. 3 residues coordinate substrate: Arg-295, His-327, and Ser-379.

The protein belongs to the RuBisCO large chain family. Type I subfamily. In terms of assembly, heterohexadecamer of 8 large chains and 8 small chains; disulfide-linked. The disulfide link is formed within the large subunit homodimers. The cofactor is Mg(2+). Post-translationally, the disulfide bond which can form in the large chain dimeric partners within the hexadecamer appears to be associated with oxidative stress and protein turnover.

The protein localises to the plastid. Its subcellular location is the chloroplast. The catalysed reaction is 2 (2R)-3-phosphoglycerate + 2 H(+) = D-ribulose 1,5-bisphosphate + CO2 + H2O. It carries out the reaction D-ribulose 1,5-bisphosphate + O2 = 2-phosphoglycolate + (2R)-3-phosphoglycerate + 2 H(+). RuBisCO catalyzes two reactions: the carboxylation of D-ribulose 1,5-bisphosphate, the primary event in carbon dioxide fixation, as well as the oxidative fragmentation of the pentose substrate in the photorespiration process. Both reactions occur simultaneously and in competition at the same active site. This is Ribulose bisphosphate carboxylase large chain from Galium aparine (Catchweed bedstraw).